The chain runs to 477 residues: UDP-N-acetylmuramate--L-alanine ligase (477 aa).

112 to 118 contributes to the ATP binding site; it reads GTHGKTT.

The protein belongs to the MurCDEF family.

The protein localises to the cytoplasm. The catalysed reaction is UDP-N-acetyl-alpha-D-muramate + L-alanine + ATP = UDP-N-acetyl-alpha-D-muramoyl-L-alanine + ADP + phosphate + H(+). It functions in the pathway cell wall biogenesis; peptidoglycan biosynthesis. Functionally, cell wall formation. The chain is UDP-N-acetylmuramate--L-alanine ligase from Cupriavidus necator (strain ATCC 17699 / DSM 428 / KCTC 22496 / NCIMB 10442 / H16 / Stanier 337) (Ralstonia eutropha).